Reading from the N-terminus, the 251-residue chain is Phosphate import ATP-binding protein PstB 2 (251 aa).

In terms of domain architecture, ABC transporter spans 5 to 246 (LTTENLSLFY…PVKQETNDYI (242 aa)). Position 37–44 (37–44 (GPSGCGKS)) interacts with ATP.

It belongs to the ABC transporter superfamily. Phosphate importer (TC 3.A.1.7) family. The complex is composed of two ATP-binding proteins (PstB), two transmembrane proteins (PstC and PstA) and a solute-binding protein (PstS).

Its subcellular location is the cell membrane. It catalyses the reaction phosphate(out) + ATP + H2O = ADP + 2 phosphate(in) + H(+). Functionally, part of the ABC transporter complex PstSACB involved in phosphate import. Responsible for energy coupling to the transport system. The sequence is that of Phosphate import ATP-binding protein PstB 2 from Lactiplantibacillus plantarum (strain ATCC BAA-793 / NCIMB 8826 / WCFS1) (Lactobacillus plantarum).